Consider the following 192-residue polypeptide: Elongation factor P (192 aa).

Belongs to the elongation factor P family.

Its subcellular location is the cytoplasm. It participates in protein biosynthesis; polypeptide chain elongation. In terms of biological role, involved in peptide bond synthesis. Stimulates efficient translation and peptide-bond synthesis on native or reconstituted 70S ribosomes in vitro. Probably functions indirectly by altering the affinity of the ribosome for aminoacyl-tRNA, thus increasing their reactivity as acceptors for peptidyl transferase. This Borreliella burgdorferi (strain ATCC 35210 / DSM 4680 / CIP 102532 / B31) (Borrelia burgdorferi) protein is Elongation factor P (efp).